A 132-amino-acid polypeptide reads, in one-letter code: uncharacterized protein (132 aa).

The 71-residue stretch at 45–115 (VHMEKHKLKI…VVIVTTAEGK (71 aa)) folds into the BIG2 domain.

To B.anthracis BA1245.

This is an uncharacterized protein from Bacillus cereus (strain ATCC 14579 / DSM 31 / CCUG 7414 / JCM 2152 / NBRC 15305 / NCIMB 9373 / NCTC 2599 / NRRL B-3711).